Here is a 250-residue protein sequence, read N- to C-terminus: Triosephosphate isomerase (250 aa).

9–11 serves as a coordination point for substrate; sequence NWK. Catalysis depends on histidine 95, which acts as the Electrophile. Residue glutamate 167 is the Proton acceptor of the active site. Substrate contacts are provided by residues glycine 173, serine 213, and 234 to 235; that span reads GG.

It belongs to the triosephosphate isomerase family. In terms of assembly, homodimer.

The protein localises to the cytoplasm. The catalysed reaction is D-glyceraldehyde 3-phosphate = dihydroxyacetone phosphate. The protein operates within carbohydrate biosynthesis; gluconeogenesis. It participates in carbohydrate degradation; glycolysis; D-glyceraldehyde 3-phosphate from glycerone phosphate: step 1/1. Involved in the gluconeogenesis. Catalyzes stereospecifically the conversion of dihydroxyacetone phosphate (DHAP) to D-glyceraldehyde-3-phosphate (G3P). This chain is Triosephosphate isomerase, found in Flavobacterium psychrophilum (strain ATCC 49511 / DSM 21280 / CIP 103535 / JIP02/86).